Reading from the N-terminus, the 88-residue chain is MSEERNTRKVYQGRVVSDKMNKTITVAVDTYLTHDVYGKRVKYTKKFKAHDENNAAKQGDIVQIMETRPLSATKHFRLVKIVEEAVIL.

It belongs to the universal ribosomal protein uS17 family. In terms of assembly, part of the 30S ribosomal subunit.

Functionally, one of the primary rRNA binding proteins, it binds specifically to the 5'-end of 16S ribosomal RNA. In Leuconostoc mesenteroides subsp. mesenteroides (strain ATCC 8293 / DSM 20343 / BCRC 11652 / CCM 1803 / JCM 6124 / NCDO 523 / NBRC 100496 / NCIMB 8023 / NCTC 12954 / NRRL B-1118 / 37Y), this protein is Small ribosomal subunit protein uS17.